A 180-amino-acid chain; its full sequence is uncharacterized protein (180 aa).

The Nudix hydrolase domain occupies 35-163 (LRHRATYIVV…TPDSLKALAL (129 aa)). Residues 72 to 94 (GGVVQADEQLLESARREAEEELG) carry the Nudix box motif. Mg(2+)-binding residues include glutamate 88 and glutamate 92.

The protein belongs to the Nudix hydrolase family. Requires Mg(2+) as cofactor.

This is an uncharacterized protein from Shigella flexneri.